Reading from the N-terminus, the 349-residue chain is Isopentenyl-diphosphate delta-isomerase (349 aa).

R6–K7 contributes to the substrate binding site. FMN is bound by residues A62 to T64, S93, and N122. Q152 is a substrate binding site. E153 lines the Mg(2+) pocket. FMN contacts are provided by residues K184, T214, G258 to G259, and A280 to G281.

It belongs to the IPP isomerase type 2 family. Homooctamer. Dimer of tetramers. The cofactor is FMN. NADPH is required as a cofactor. It depends on Mg(2+) as a cofactor.

The protein resides in the cytoplasm. The enzyme catalyses isopentenyl diphosphate = dimethylallyl diphosphate. In terms of biological role, involved in the biosynthesis of isoprenoids. Catalyzes the 1,3-allylic rearrangement of the homoallylic substrate isopentenyl (IPP) to its allylic isomer, dimethylallyl diphosphate (DMAPP). This chain is Isopentenyl-diphosphate delta-isomerase, found in Bacillus subtilis (strain 168).